The primary structure comprises 251 residues: Uridylate kinase (251 aa).

ATP is bound at residue 11–14 (KLSG). The tract at residues 19–24 (GNQGFG) is involved in allosteric activation by GTP. G53 provides a ligand contact to UMP. G54 and R58 together coordinate ATP. Residues D73 and 134 to 141 (TGNPYFTT) contribute to the UMP site. The ATP site is built by T161, Y167, and D170.

The protein belongs to the UMP kinase family. As to quaternary structure, homohexamer.

Its subcellular location is the cytoplasm. The catalysed reaction is UMP + ATP = UDP + ADP. The protein operates within pyrimidine metabolism; CTP biosynthesis via de novo pathway; UDP from UMP (UMPK route): step 1/1. Its activity is regulated as follows. Allosterically activated by GTP. Inhibited by UTP. Functionally, catalyzes the reversible phosphorylation of UMP to UDP. The polypeptide is Uridylate kinase (Protochlamydia amoebophila (strain UWE25)).